Reading from the N-terminus, the 194-residue chain is Segregation and condensation protein B (194 aa).

This sequence belongs to the ScpB family. Homodimer. Homodimerization may be required to stabilize the binding of ScpA to the Smc head domains. Component of a cohesin-like complex composed of ScpA, ScpB and the Smc homodimer, in which ScpA and ScpB bind to the head domain of Smc. The presence of the three proteins is required for the association of the complex with DNA.

The protein localises to the cytoplasm. Functionally, participates in chromosomal partition during cell division. May act via the formation of a condensin-like complex containing Smc and ScpA that pull DNA away from mid-cell into both cell halves. This Brevibacillus brevis (strain 47 / JCM 6285 / NBRC 100599) protein is Segregation and condensation protein B.